We begin with the raw amino-acid sequence, 85 residues long: Translation initiation factor IF-1 1 (85 aa).

The S1-like domain occupies 1–72 (MSKEDLIEMQ…NKGRLTFRHI (72 aa)).

It belongs to the IF-1 family. Component of the 30S ribosomal translation pre-initiation complex which assembles on the 30S ribosome in the order IF-2 and IF-3, IF-1 and N-formylmethionyl-tRNA(fMet); mRNA recruitment can occur at any time during PIC assembly.

Its subcellular location is the cytoplasm. Its function is as follows. One of the essential components for the initiation of protein synthesis. Stabilizes the binding of IF-2 and IF-3 on the 30S subunit to which N-formylmethionyl-tRNA(fMet) subsequently binds. Helps modulate mRNA selection, yielding the 30S pre-initiation complex (PIC). Upon addition of the 50S ribosomal subunit IF-1, IF-2 and IF-3 are released leaving the mature 70S translation initiation complex. In Paracidovorax citrulli (strain AAC00-1) (Acidovorax citrulli), this protein is Translation initiation factor IF-1 1.